Here is a 1243-residue protein sequence, read N- to C-terminus: Interphotoreceptor matrix proteoglycan 2 (1243 aa).

A signal peptide spans 1–27 (MIMFLPVGRMSLGILILFLTGGNLVSA). The Extracellular segment spans residues 28–1106 (SEERQEPMHA…EFVSEPFVIG (1079 aa)). Positions 205–234 (GLASESSAASPQESISNEIENVTEEPTQPA) are disordered. A compositionally biased stretch (low complexity) spans 207 to 220 (ASESSAASPQESIS). Residues 221–230 (NEIENVTEEP) show a composition bias toward polar residues. Residue Asn-225 is glycosylated (N-linked (GlcNAc...) asparagine). One can recognise an SEA 1 domain in the interval 235–349 (AEQIAEFSIQ…KPTAVYTISN (115 aa)). Positions 255 to 263 (RDPSSALYR) are hyaluronan-binding motif involved in chondroitin sulfate A-binding. N-linked (GlcNAc...) asparagine glycans are attached at residues Asn-297, Asn-316, and Asn-366. 3 O-linked (GalNAc...) threonine glycosylation sites follow: Thr-427, Thr-428, and Thr-429. An N-linked (GlcNAc...) asparagine glycan is attached at Asn-582. 3 O-linked (GalNAc...) threonine glycosylation sites follow: Thr-701, Thr-704, and Thr-712. The segment covering 748 to 762 (EDMVHTESSSHKELD) has biased composition (basic and acidic residues). Positions 748 to 768 (EDMVHTESSSHKELDSEVPVS) are disordered. Thr-817 and Thr-888 each carry an O-linked (GalNAc...) threonine glycan. The SEA 2 domain maps to 900–1013 (GALVVFFSLR…YSLDVESGDE (114 aa)). N-linked (GlcNAc...) asparagine glycans are attached at residues Asn-945 and Asn-959. EGF-like domains follow at residues 1013-1054 (EANP…LPCQ) and 1055-1096 (SLCD…QHCE). 6 disulfides stabilise this stretch: Cys-1017-Cys-1028, Cys-1022-Cys-1039, Cys-1041-Cys-1053, Cys-1057-Cys-1070, Cys-1064-Cys-1080, and Cys-1082-Cys-1095. A hyaluronan-binding motif involved in chondroitin sulfate C-binding region spans residues 1083–1091 (RVGSNWWYR). Residues 1107 to 1127 (ITIASVVSFLLVASAVVFFLV) traverse the membrane as a helical segment. The segment at 1128–1136 (KMLQAQNVR) is hyaluronan-binding motif involved in chondroitin sulfate A- and C-binding. Topologically, residues 1128-1243 (KMLQAQNVRR…FVREHQMEEL (116 aa)) are cytoplasmic. The hyaluronan-binding motif involved in chondroitin sulfate C-binding stretch occupies residues 1139 to 1147 (RQRPTSSSR). The segment at 1212–1220 (KEEIQERMR) is hyaluronan-binding motif involved in chondroitin sulfate A- and C-binding motif.

Expressed in the retina (at protein level). Expressed in the pineal gland.

The protein localises to the photoreceptor outer segment membrane. The protein resides in the photoreceptor inner segment membrane. It is found in the secreted. It localises to the extracellular space. Its subcellular location is the extracellular matrix. The protein localises to the interphotoreceptor matrix. Functionally, chondroitin sulfate- and hyaluronan-binding proteoglycan involved in the organization of interphotoreceptor matrix; may participate in the maturation and maintenance of the light-sensitive photoreceptor outer segment. Binds heparin. The protein is Interphotoreceptor matrix proteoglycan 2 (Impg2) of Mus musculus (Mouse).